The chain runs to 334 residues: Proline-serine-threonine phosphatase-interacting protein 2 (334 aa).

One can recognise an F-BAR domain in the interval 4–264 (SLFKGNFWST…SLETCSIEKD (261 aa)). The stretch at 66 to 163 (GQSEINTLKR…AEQAVHRSAN (98 aa)) forms a coiled coil. The tract at residues 288 to 322 (YSPQRNAAPPGKTTGPNPARRGPLPVPKRIPDDPD) is disordered. 2 positions are modified to phosphotyrosine: Y323 and Y329.

Phosphorylated on tyrosine. In terms of tissue distribution, expressed in macrophage-containing tissues, including bone marrow, spleen, liver, kidney, intestine and brain.

The protein resides in the cytoplasm. Its subcellular location is the membrane. Functionally, binds to F-actin. May be involved in regulation of the actin cytoskeleton. The chain is Proline-serine-threonine phosphatase-interacting protein 2 (Pstpip2) from Mus musculus (Mouse).